The primary structure comprises 451 residues: ATNRDQESSGFAWWAGNARLINLSGKLLGAHVAHAGLIVFWAGAMTLFELAHFIPEKPMYEQGLILIPHIATLGWGVGPGGEVVDTFPFFVVGVVHLISSAVLGFGGVYHAIRGPETLEEYSSFFGYDWKDKNKMTTILGFHLIVLGIGALLLVAKAMFFGGLYDTWAPGGGDVRVITNPTLDPRVIFGYLLKSPFGGEGWIVSVNNLEDVVGGHIWIGLICIAGGIWHILTTPFGWARRAFIWSGEAYLSYSLGALSMMGFIATCFVWFNNTVYPSEFYGPTGPEASQAQAMTFLIRDQKLGANVGSAQGPTGLGKYLMRSPTGEIIFGGETMRFWDFRGPWLEPLRGPNGLDLNKIKNDIQPWQERRAAEYMTHAPLGSLNSVGGVATEINSVNFVSPRSWLATSHFVLAFFFLVGHLWHAGRARAAAAGFEKGIDRESEPVLSMPSLD.

Over 1 to 46 (ATNRDQESSGFAWWAGNARLINLSGKLLGAHVAHAGLIVFWAGAMT) the chain is Cytoplasmic. 3 residues coordinate chlorophyll a: Trp13, Leu27, and Ala30. Residues 47–71 (LFELAHFIPEKPMYEQGLILIPHIA) traverse the membrane as a helical segment. The Lumenal portion of the chain corresponds to 72-111 (TLGWGVGPGGEVVDTFPFFVVGVVHLISSAVLGFGGVYHA). 2 residues coordinate chlorophyll a: Val92 and Gly106. A helical membrane pass occupies residues 112-133 (IRGPETLEEYSSFFGYDWKDKN). At 134–155 (KMTTILGFHLIVLGIGALLLVA) the chain is on the cytoplasmic side. Ile138 lines the chlorophyll a pocket. Residues 156-178 (KAMFFGGLYDTWAPGGGDVRVIT) form a helical membrane-spanning segment. Residues 179-232 (NPTLDPRVIFGYLLKSPFGGEGWIVSVNNLEDVVGGHIWIGLICIAGGIWHILT) lie on the Lumenal side of the membrane. Positions 211 and 225 each coordinate chlorophyll a. Residues 233–253 (TPFGWARRAFIWSGEAYLSYS) form a helical membrane-spanning segment. Residues 254–268 (LGALSMMGFIATCFV) lie on the Cytoplasmic side of the membrane. A helical transmembrane segment spans residues 269–290 (WFNNTVYPSEFYGPTGPEASQA). Residues 291–424 (QAMTFLIRDQ…FLVGHLWHAG (134 aa)) lie on the Lumenal side of the membrane. Glu345 is a [CaMn4O5] cluster binding site. Chlorophyll a is bound by residues Leu404, Phe415, and Gly418. The helical transmembrane segment at 425–449 (RARAAAAGFEKGIDRESEPVLSMPS) threads the bilayer. The Cytoplasmic segment spans residues 450–451 (LD).

Belongs to the PsbB/PsbC family. PsbC subfamily. As to quaternary structure, PSII is composed of 1 copy each of membrane proteins PsbA, PsbB, PsbC, PsbD, PsbE, PsbF, PsbH, PsbI, PsbJ, PsbK, PsbL, PsbM, PsbT, PsbX, PsbY, PsbZ, Psb30/Ycf12, peripheral proteins PsbO, CyanoQ (PsbQ), PsbU, PsbV and a large number of cofactors. It forms dimeric complexes. It depends on Binds multiple chlorophylls and provides some of the ligands for the Ca-4Mn-5O cluster of the oxygen-evolving complex. It may also provide a ligand for a Cl- that is required for oxygen evolution. PSII binds additional chlorophylls, carotenoids and specific lipids. as a cofactor.

It is found in the cellular thylakoid membrane. In terms of biological role, one of the components of the core complex of photosystem II (PSII). It binds chlorophyll and helps catalyze the primary light-induced photochemical processes of PSII. PSII is a light-driven water:plastoquinone oxidoreductase, using light energy to abstract electrons from H(2)O, generating O(2) and a proton gradient subsequently used for ATP formation. The sequence is that of Photosystem II CP43 reaction center protein from Thermostichus vulcanus (Synechococcus vulcanus).